The following is a 286-amino-acid chain: Ferric acinetobactin reductase (286 aa).

The FAD-binding FR-type domain maps to 25-131 (MEQLEMTIVS…IGPRPHFIPN (107 aa)). Positions 79, 80, 82, 96, 98, 100, 102, 104, 106, 250, 252, and 255 each coordinate FAD.

The protein belongs to the SIP oxidoreductase family. Monomer in solution. The cofactor is FAD.

It carries out the reaction 2 a Fe(II)-siderophore + NAD(+) + H(+) = 2 a Fe(III)-siderophore + NADH. The enzyme catalyses 2 a Fe(II)-siderophore + NADP(+) + H(+) = 2 a Fe(III)-siderophore + NADPH. Its function is as follows. Ferric-siderophore reductase involved in iron removal from the siderophores after their transport into the cell. Interacts with the siderophores acinetobactin (Acb) and preacinetobactin (pre-Acb) and catalyzes the reduction of the ferric iron bound to the siderophores to ferrous iron, resulting in destabilization of the siderophore chelation complex and entrance of ferrous iron into the intracellular pool of bioavailable metals. Can use NADH and NADPH as electron donors in vitro, but the reduction rate is very slow, suggesting that NADH and NADPH are not the physiological partners of BauF. The protein is Ferric acinetobactin reductase of Acinetobacter baumannii.